The chain runs to 280 residues: Hydroxyethylthiazole kinase (280 aa).

Residue Met-58 coordinates substrate. Arg-129 contacts ATP. Ala-206 contacts substrate.

This sequence belongs to the Thz kinase family. Mg(2+) is required as a cofactor.

It carries out the reaction 5-(2-hydroxyethyl)-4-methylthiazole + ATP = 4-methyl-5-(2-phosphooxyethyl)-thiazole + ADP + H(+). It participates in cofactor biosynthesis; thiamine diphosphate biosynthesis; 4-methyl-5-(2-phosphoethyl)-thiazole from 5-(2-hydroxyethyl)-4-methylthiazole: step 1/1. Its function is as follows. Thiazole kinase involved in thiamine salvage pathway. The polypeptide is Hydroxyethylthiazole kinase (THIM) (Zea mays (Maize)).